The following is a 674-amino-acid chain: Xaa-Pro aminopeptidase 2 (674 aa).

An N-terminal signal peptide occupies residues 1 to 21 (MARAHWGCCPWLVLLCACAWG). 3 N-linked (GlcNAc...) asparagine glycosylation sites follow: Asn-35, Asn-49, and Asn-65. Residue Arg-116 participates in substrate binding. 2 N-linked (GlcNAc...) asparagine glycosylation sites follow: Asn-278 and Asn-291. His-430 contributes to the substrate binding site. Positions 450, 461, and 524 each coordinate Zn(2+). The substrate site is built by His-524, His-533, and Glu-555. Zn(2+) is bound by residues Glu-555 and Glu-569. Ala-649 is lipidated: GPI-anchor amidated alanine. A propeptide spans 650–674 (ARAPDTASWASVLVVSTLAILGWSV) (removed in mature form).

This sequence belongs to the peptidase M24B family. In terms of assembly, homotrimer. The cofactor is Zn(2+). Post-translationally, N-glycosylated. In terms of tissue distribution, expressed in kidney, lung, heart, placenta, liver, small intestine and colon. No expression in brain, skeletal muscle, pancreas, spleen, thymus, prostate, testis and ovary.

Its subcellular location is the cell membrane. The catalysed reaction is Release of any N-terminal amino acid, including proline, that is linked to proline, even from a dipeptide or tripeptide.. Its activity is regulated as follows. Inhibited by apstatin and the chelating agent 1,10-phenanthroline. Also inhibited by high concentrations of Zn(2+). Not significantly inhibited by bestatin or phosphoramidon. Its function is as follows. Membrane-bound metalloprotease which catalyzes the removal of a penultimate prolyl residue from the N-termini of peptides, such as Arg-Pro-Pro. May play a role in the metabolism of the vasodilator bradykinin. The chain is Xaa-Pro aminopeptidase 2 (XPNPEP2) from Homo sapiens (Human).